The chain runs to 134 residues: Gastrin-releasing peptide (134 aa).

Positions Met-1–Ala-23 are cleaved as a signal peptide. The residue at position 50 (Met-50) is a Methionine amide. A propeptide spanning residues Ser-54–Asn-134 is cleaved from the precursor. The segment at Gly-95–Asn-134 is disordered. Positions Gly-123–Asn-134 are enriched in basic and acidic residues.

This sequence belongs to the bombesin/neuromedin-B/ranatensin family. In terms of tissue distribution, detected in adrenal medulla (at protein level).

Its subcellular location is the cytoplasmic vesicle. It is found in the secretory vesicle lumen. The protein localises to the secreted. It localises to the cell projection. The protein resides in the neuron projection. Its function is as follows. Stimulates the release of gastrin and other gastrointestinal hormones. Contributes to the perception of prurient stimuli and to the transmission of itch signals in the spinal cord that promote scratching behavior. Contributes primarily to nonhistaminergic itch sensation. In one study, shown to act in the amygdala as part of an inhibitory network which inhibits memory specifically related to learned fear. In another study, shown to act on vasoactive intestinal peptide (VIP)-expressing cells in the auditory cortex, most likely via extrasynaptic diffusion from local and long-range sources, to mediate disinhibition of glutamatergic cells via VIP cell-specific GRPR signaling which leads to enhanced auditory fear memories. Contributes to the regulation of food intake. Inhibits voltage-gated sodium channels but enhances voltage-gated potassium channels in hippocampal neurons. Induces sighing by acting directly on the pre-Botzinger complex, a cluster of several thousand neurons in the ventrolateral medulla responsible for inspiration during respiratory activity. Functionally, induces an itch response through activation of receptors present on mast cells, triggering mast cell degranulation. The protein is Gastrin-releasing peptide (GRP) of Bos taurus (Bovine).